The primary structure comprises 185 residues: Ribosome-recycling factor (185 aa).

It belongs to the RRF family.

The protein resides in the cytoplasm. Functionally, responsible for the release of ribosomes from messenger RNA at the termination of protein biosynthesis. May increase the efficiency of translation by recycling ribosomes from one round of translation to another. This chain is Ribosome-recycling factor, found in Yersinia pseudotuberculosis serotype O:1b (strain IP 31758).